The primary structure comprises 875 residues: GATOR2 complex protein MIOS (875 aa).

WD repeat units lie at residues 58 to 100, 111 to 155, 182 to 221, 223 to 261, 265 to 306, 320 to 360, and 395 to 437; these read SDTP…NSKF, KHAR…TPDI, GQND…QKMF, NTKA…KPVL, EQPK…TPIG, PCDN…SLAW, and RLRA…KQYT. A C4-type zinc finger spans residues 735 to 781; it reads VSCNFCGKSISYSCSSVPHQGRGFSQYGVSGSPTKSKVTSCPGCRKP. Zn(2+) is bound by residues Cys-737 and Cys-740. Phosphoserine is present on residues Ser-759 and Ser-766. Positions 775, 778, 788, 827, 830, 832, 835, 838, 849, 854, and 858 each coordinate Zn(2+). An RING-type; atypical zinc finger spans residues 782-863; that stretch reads LPRCALCLIN…CTCKCMQLDT (82 aa).

This sequence belongs to the WD repeat mio family. Component of the GATOR2 subcomplex, composed of MIOS, SEC13, SEH1L, WDR24 and WDR59. The GATOR2 complex interacts with CASTOR1 and CASTOR2; the interaction is negatively regulated by arginine. CASTOR1 and CASTOR2 convey leucine availability via direct interaction with MIOS. The GATOR2 complex interacts with SESN1, SESN2 and SESN3; the interaction is negatively regulated by amino acids. Interacts with SAR1A and SAR1B; the interaction is direct, disrupted by leucine and mediates the interaction of SAR1A or SAR1B with the GATOR2 complex to negatively regulate the TORC1 signaling upon leucine deprivation. In terms of tissue distribution, widely expressed. In brain, expressed in neurons and glia (oligodendrocytes and astrocytes), with more abundance in neurons.

The protein localises to the lysosome membrane. With respect to regulation, the GATOR2 complex is negatively regulated by the upstream amino acid sensors CASTOR1 and SESN2, which sequester the GATOR2 complex in absence of amino acids. In the presence of abundant amino acids, GATOR2 is released from CASTOR1 and SESN2 and activated. Functionally, as a component of the GATOR2 complex, functions as an activator of the amino acid-sensing branch of the mTORC1 signaling pathway. The GATOR2 complex indirectly activates mTORC1 through the inhibition of the GATOR1 subcomplex. GATOR2 probably acts as an E3 ubiquitin-protein ligase toward GATOR1. In the presence of abundant amino acids, the GATOR2 complex mediates ubiquitination of the NPRL2 core component of the GATOR1 complex, leading to GATOR1 inactivation. In the absence of amino acids, GATOR2 is inhibited, activating the GATOR1 complex. Within the GATOR2 complex, MIOS is required to prevent autoubiquitination of WDR24, the catalytic subunit of the complex. The GATOR2 complex is required for brain myelination. This Mus musculus (Mouse) protein is GATOR2 complex protein MIOS.